The sequence spans 572 residues: Phosphoglucomutase-1 (572 aa).

Substrate contacts are provided by residues Thr23, Arg27, 120–121 (SH), and Lys133. Residue Ser120 is the Phosphoserine intermediate of the active site. Residue Ser120 participates in Mg(2+) binding. Asp288, Asp290, and Asp292 together coordinate Mg(2+). Residues 292–293 (DR), Thr356, 375–377 (EES), Lys388, and Arg524 contribute to the substrate site.

This sequence belongs to the phosphohexose mutase family. Requires Mg(2+) as cofactor.

Its subcellular location is the cytoplasm. It carries out the reaction alpha-D-glucose 1-phosphate = alpha-D-glucose 6-phosphate. In terms of biological role, this enzyme participates in both the breakdown and synthesis of glucose. This Dictyostelium discoideum (Social amoeba) protein is Phosphoglucomutase-1 (pgmA).